Reading from the N-terminus, the 117-residue chain is Large ribosomal subunit protein uL18 (117 aa).

This sequence belongs to the universal ribosomal protein uL18 family. In terms of assembly, part of the 50S ribosomal subunit; part of the 5S rRNA/L5/L18/L25 subcomplex. Contacts the 5S and 23S rRNAs.

This is one of the proteins that bind and probably mediate the attachment of the 5S RNA into the large ribosomal subunit, where it forms part of the central protuberance. This chain is Large ribosomal subunit protein uL18, found in Yersinia enterocolitica serotype O:8 / biotype 1B (strain NCTC 13174 / 8081).